The following is a 309-amino-acid chain: p-hydroxybenzoic acid efflux pump subunit AaeA (309 aa).

A helical membrane pass occupies residues 12-32 (AITVVLVILAFIAIFNAWVYY).

It belongs to the membrane fusion protein (MFP) (TC 8.A.1) family.

Its subcellular location is the cell inner membrane. Functionally, forms an efflux pump with AaeB. This chain is p-hydroxybenzoic acid efflux pump subunit AaeA, found in Escherichia coli O157:H7.